The following is a 152-amino-acid chain: Transcriptional regulator MraZ (152 aa).

SpoVT-AbrB domains are found at residues 5 to 52 (ATLV…PLPE) and 81 to 124 (ASEC…DETT).

The protein belongs to the MraZ family. As to quaternary structure, forms oligomers.

It localises to the cytoplasm. It is found in the nucleoid. Negatively regulates its own expression and that of the subsequent genes in the proximal part of the division and cell wall (dcw) gene cluster. Acts by binding directly to DNA. May also regulate the expression of genes outside the dcw cluster. The chain is Transcriptional regulator MraZ from Escherichia fergusonii (strain ATCC 35469 / DSM 13698 / CCUG 18766 / IAM 14443 / JCM 21226 / LMG 7866 / NBRC 102419 / NCTC 12128 / CDC 0568-73).